A 65-amino-acid chain; its full sequence is Large ribosomal subunit protein bL35 (65 aa).

It belongs to the bacterial ribosomal protein bL35 family.

The chain is Large ribosomal subunit protein bL35 from Synechococcus sp. (strain WH7803).